The chain runs to 273 residues: ATP synthase subunit a (273 aa).

Helical transmembrane passes span 34-54 (IINMDTIFWSIFAGVVGCLFM), 94-114 (FIAPLALTVFVWVALMNSLDF), 115-135 (LPVDMFSAFFHAVGLDSLITH), 143-163 (DLNGTMGIALGVFALMIFYNI), 171-191 (FVHELFAAPFGIWLAPFNLLL), 218-238 (FLLIALLGSTATAFGFFGHVV), and 244-264 (AIFHILIVFLQAFIFMMLTLV).

The protein belongs to the ATPase A chain family. In terms of assembly, F-type ATPases have 2 components, CF(1) - the catalytic core - and CF(0) - the membrane proton channel. CF(1) has five subunits: alpha(3), beta(3), gamma(1), delta(1), epsilon(1). CF(0) has three main subunits: a(1), b(2) and c(9-12). The alpha and beta chains form an alternating ring which encloses part of the gamma chain. CF(1) is attached to CF(0) by a central stalk formed by the gamma and epsilon chains, while a peripheral stalk is formed by the delta and b chains.

It is found in the cell inner membrane. In terms of biological role, key component of the proton channel; it plays a direct role in the translocation of protons across the membrane. The protein is ATP synthase subunit a of Janthinobacterium sp. (strain Marseille) (Minibacterium massiliensis).